The following is a 180-amino-acid chain: Ribulose bisphosphate carboxylase small subunit, chloroplastic 2 (180 aa).

Residues Met-1 to Gln-56 constitute a chloroplast transit peptide.

Belongs to the RuBisCO small chain family. As to quaternary structure, heterohexadecamer of 8 large and 8 small subunits.

The protein localises to the plastid. It is found in the chloroplast. In terms of biological role, ruBisCO catalyzes two reactions: the carboxylation of D-ribulose 1,5-bisphosphate, the primary event in carbon dioxide fixation, as well as the oxidative fragmentation of the pentose substrate. Both reactions occur simultaneously and in competition at the same active site. Although the small subunit is not catalytic it is essential for maximal activity. This chain is Ribulose bisphosphate carboxylase small subunit, chloroplastic 2, found in Petunia hybrida (Petunia).